Reading from the N-terminus, the 104-residue chain is Large ribosomal subunit protein uL24 (104 aa).

This sequence belongs to the universal ribosomal protein uL24 family. As to quaternary structure, part of the 50S ribosomal subunit.

One of two assembly initiator proteins, it binds directly to the 5'-end of the 23S rRNA, where it nucleates assembly of the 50S subunit. Functionally, one of the proteins that surrounds the polypeptide exit tunnel on the outside of the subunit. The polypeptide is Large ribosomal subunit protein uL24 (Mesorhizobium japonicum (strain LMG 29417 / CECT 9101 / MAFF 303099) (Mesorhizobium loti (strain MAFF 303099))).